The primary structure comprises 206 residues: Large ribosomal subunit protein uL4 (206 aa).

It belongs to the universal ribosomal protein uL4 family. In terms of assembly, part of the 50S ribosomal subunit.

Its function is as follows. One of the primary rRNA binding proteins, this protein initially binds near the 5'-end of the 23S rRNA. It is important during the early stages of 50S assembly. It makes multiple contacts with different domains of the 23S rRNA in the assembled 50S subunit and ribosome. In terms of biological role, forms part of the polypeptide exit tunnel. The sequence is that of Large ribosomal subunit protein uL4 from Jannaschia sp. (strain CCS1).